The following is a 267-amino-acid chain: 4-hydroxy-tetrahydrodipicolinate reductase (267 aa).

Residues 8–13 (GAAGRM) and D34 contribute to the NAD(+) site. R35 contributes to the NADP(+) binding site. NAD(+)-binding positions include 98–100 (GTT) and 122–125 (AANF). H155 serves as the catalytic Proton donor/acceptor. H156 is a (S)-2,3,4,5-tetrahydrodipicolinate binding site. Catalysis depends on K159, which acts as the Proton donor. A (S)-2,3,4,5-tetrahydrodipicolinate-binding site is contributed by 165–166 (GT).

The protein belongs to the DapB family.

It localises to the cytoplasm. It carries out the reaction (S)-2,3,4,5-tetrahydrodipicolinate + NAD(+) + H2O = (2S,4S)-4-hydroxy-2,3,4,5-tetrahydrodipicolinate + NADH + H(+). It catalyses the reaction (S)-2,3,4,5-tetrahydrodipicolinate + NADP(+) + H2O = (2S,4S)-4-hydroxy-2,3,4,5-tetrahydrodipicolinate + NADPH + H(+). The protein operates within amino-acid biosynthesis; L-lysine biosynthesis via DAP pathway; (S)-tetrahydrodipicolinate from L-aspartate: step 4/4. In terms of biological role, catalyzes the conversion of 4-hydroxy-tetrahydrodipicolinate (HTPA) to tetrahydrodipicolinate. The chain is 4-hydroxy-tetrahydrodipicolinate reductase from Pseudomonas putida (strain GB-1).